We begin with the raw amino-acid sequence, 317 residues long: Aspartate carbamoyltransferase catalytic subunit (317 aa).

Carbamoyl phosphate is bound by residues Arg-64 and Thr-65. Residue Lys-92 participates in L-aspartate binding. Arg-114, His-142, and Gln-145 together coordinate carbamoyl phosphate. L-aspartate is bound by residues Arg-176 and Arg-230. Positions 271 and 272 each coordinate carbamoyl phosphate.

The protein belongs to the aspartate/ornithine carbamoyltransferase superfamily. ATCase family. Heterododecamer (2C3:3R2) of six catalytic PyrB chains organized as two trimers (C3), and six regulatory PyrI chains organized as three dimers (R2).

It carries out the reaction carbamoyl phosphate + L-aspartate = N-carbamoyl-L-aspartate + phosphate + H(+). The protein operates within pyrimidine metabolism; UMP biosynthesis via de novo pathway; (S)-dihydroorotate from bicarbonate: step 2/3. Functionally, catalyzes the condensation of carbamoyl phosphate and aspartate to form carbamoyl aspartate and inorganic phosphate, the committed step in the de novo pyrimidine nucleotide biosynthesis pathway. This is Aspartate carbamoyltransferase catalytic subunit from Nitratidesulfovibrio vulgaris (strain DP4) (Desulfovibrio vulgaris).